The following is a 745-amino-acid chain: Probable xanthine dehydrogenase subunit D (745 aa).

Positions 204, 235, and 508 each coordinate Mo-molybdopterin.

It belongs to the xanthine dehydrogenase family. In terms of assembly, could be composed of four subunits: PucA, PucC, PucD and PucE. It depends on Mo-molybdopterin as a cofactor.

The catalysed reaction is xanthine + NAD(+) + H2O = urate + NADH + H(+). The enzyme catalyses hypoxanthine + NAD(+) + H2O = xanthine + NADH + H(+). The protein operates within purine metabolism; hypoxanthine degradation; urate from hypoxanthine: step 1/2. It functions in the pathway purine metabolism; hypoxanthine degradation; urate from hypoxanthine: step 2/2. In terms of biological role, oxidizes hypoxanthine and xanthine to uric acid. The polypeptide is Probable xanthine dehydrogenase subunit D (pucD) (Bacillus subtilis (strain 168)).